Here is a 427-residue protein sequence, read N- to C-terminus: Serine--tRNA ligase (427 aa).

Residue 235–237 (TAE) coordinates L-serine. ATP is bound by residues 266 to 268 (RRE) and Val282. Glu289 contacts L-serine. Residue 353–356 (EASS) coordinates ATP. Ser389 is an L-serine binding site.

It belongs to the class-II aminoacyl-tRNA synthetase family. Type-1 seryl-tRNA synthetase subfamily. As to quaternary structure, homodimer. The tRNA molecule binds across the dimer.

The protein localises to the cytoplasm. It catalyses the reaction tRNA(Ser) + L-serine + ATP = L-seryl-tRNA(Ser) + AMP + diphosphate + H(+). The catalysed reaction is tRNA(Sec) + L-serine + ATP = L-seryl-tRNA(Sec) + AMP + diphosphate + H(+). It functions in the pathway aminoacyl-tRNA biosynthesis; selenocysteinyl-tRNA(Sec) biosynthesis; L-seryl-tRNA(Sec) from L-serine and tRNA(Sec): step 1/1. Functionally, catalyzes the attachment of serine to tRNA(Ser). Is also able to aminoacylate tRNA(Sec) with serine, to form the misacylated tRNA L-seryl-tRNA(Sec), which will be further converted into selenocysteinyl-tRNA(Sec). This Chlorobium phaeobacteroides (strain BS1) protein is Serine--tRNA ligase.